The chain runs to 450 residues: Glucose-6-phosphate isomerase (450 aa).

Thr-38 carries the phosphothreonine modification. Residue Glu-290 is the Proton donor of the active site. Catalysis depends on residues His-311 and Lys-425.

The protein belongs to the GPI family.

The protein localises to the cytoplasm. It catalyses the reaction alpha-D-glucose 6-phosphate = beta-D-fructose 6-phosphate. The protein operates within carbohydrate biosynthesis; gluconeogenesis. It participates in carbohydrate degradation; glycolysis; D-glyceraldehyde 3-phosphate and glycerone phosphate from D-glucose: step 2/4. In terms of biological role, catalyzes the reversible isomerization of glucose-6-phosphate to fructose-6-phosphate. This Bacillus licheniformis (strain ATCC 14580 / DSM 13 / JCM 2505 / CCUG 7422 / NBRC 12200 / NCIMB 9375 / NCTC 10341 / NRRL NRS-1264 / Gibson 46) protein is Glucose-6-phosphate isomerase.